A 248-amino-acid polypeptide reads, in one-letter code: PF03932 family protein CutC (248 aa).

This sequence belongs to the CutC family. Homodimer.

It is found in the cytoplasm. In Escherichia coli (strain 55989 / EAEC), this protein is PF03932 family protein CutC.